We begin with the raw amino-acid sequence, 544 residues long: Chaperonin GroEL 3 (544 aa).

Residues 30–33 (TLGP), lysine 51, 87–91 (DGTTT), glycine 415, and aspartate 496 contribute to the ATP site.

Belongs to the chaperonin (HSP60) family. In terms of assembly, forms a cylinder of 14 subunits composed of two heptameric rings stacked back-to-back. Interacts with the co-chaperonin GroES.

It localises to the cytoplasm. It carries out the reaction ATP + H2O + a folded polypeptide = ADP + phosphate + an unfolded polypeptide.. Its function is as follows. Together with its co-chaperonin GroES, plays an essential role in assisting protein folding. The GroEL-GroES system forms a nano-cage that allows encapsulation of the non-native substrate proteins and provides a physical environment optimized to promote and accelerate protein folding. The sequence is that of Chaperonin GroEL 3 from Rhizobium etli (strain ATCC 51251 / DSM 11541 / JCM 21823 / NBRC 15573 / CFN 42).